Here is a 908-residue protein sequence, read N- to C-terminus: 26S proteasome non-ATPase regulatory subunit 2 (908 aa).

N-acetylmethionine is present on Met1. Residues 1-51 (MEEGGRDKTPVQSQQPSATTPSGADEKSSGKERRDAGEKDKEQELSEEDKQ) are disordered. Phosphothreonine is present on residues Thr9 and Thr20. Residues 10-22 (PVQSQQPSATTPS) show a composition bias toward polar residues. Positions 24 to 51 (ADEKSSGKERRDAGEKDKEQELSEEDKQ) are enriched in basic and acidic residues. A phosphoserine mark is found at Ser29 and Ser147. Tyr194 is subject to Phosphotyrosine. 2 positions are modified to phosphoserine: Ser361 and Ser363. PC repeat units follow at residues 409–442 (SAAA…YIKS), 443–479 (GALL…TMRL), 480–514 (GSIF…SMEV), 517–551 (VTAL…TELK), and 560–589 (LGLG…PFRS). Lys551 bears the N6-acetyllysine mark. A compositionally biased stretch (basic and acidic residues) spans 623–643 (KEKEEDKDKKEKKDKDKKEAP). A disordered region spans residues 623 to 645 (KEKEEDKDKKEKKDKDKKEAPAD). 2 PC repeats span residues 692–723 (LALA…EVSY) and 742–757 (AAML…KDPN). Residues 708–903 (DTLSKFSHDA…LEGFVILRKN (196 aa)) form a required for interaction with UBLCP1 region.

Belongs to the proteasome subunit S2 family. Component of the 19S proteasome regulatory particle complex. The 26S proteasome consists of a 20S core particle (CP) and two 19S regulatory subunits (RP). The regulatory particle is made of a lid composed of 9 subunits, a base containing 6 ATPases and few additional components including PSMD2. Interacts with RPGRIP1L. Interacts with CRY1 in a KDM8-dependent manner. Interacts (via C-terminus) with phosphatase UBLCP1 (via ubiquitin-like domain); the interaction recruits UBLCP1 to the 19S regulatory particle where it dephosphorylates 19S subunit PSMC2/RPT1 which impairs PSMC2 ATPase activity and disrupts 26S proteasome assembly.

Component of the 26S proteasome, a multiprotein complex involved in the ATP-dependent degradation of ubiquitinated proteins. This complex plays a key role in the maintenance of protein homeostasis by removing misfolded or damaged proteins, which could impair cellular functions, and by removing proteins whose functions are no longer required. Therefore, the proteasome participates in numerous cellular processes, including cell cycle progression, apoptosis, or DNA damage repair. In terms of biological role, binds to the intracellular domain of tumor necrosis factor type 1 receptor. The binding domain of TRAP1 and TRAP2 resides outside the death domain of TNFR1. This chain is 26S proteasome non-ATPase regulatory subunit 2 (Psmd2), found in Mus musculus (Mouse).